A 536-amino-acid chain; its full sequence is uncharacterized protein (536 aa).

The SWIM-type zinc finger occupies 71-98; sequence LFVIVKSGCSCPSGRICRHMLAVFLYVY. The stretch at 482–528 forms a coiled coil; it reads YKEAARYLKKLRTLYKKAKKQKVWERYIQLLSSHYKRLRALQEELQK.

This is an uncharacterized protein from Bacillus subtilis (strain 168).